A 112-amino-acid polypeptide reads, in one-letter code: Putative pterin-4-alpha-carbinolamine dehydratase (112 aa).

It belongs to the pterin-4-alpha-carbinolamine dehydratase family.

The catalysed reaction is (4aS,6R)-4a-hydroxy-L-erythro-5,6,7,8-tetrahydrobiopterin = (6R)-L-erythro-6,7-dihydrobiopterin + H2O. The sequence is that of Putative pterin-4-alpha-carbinolamine dehydratase from Vibrio parahaemolyticus serotype O3:K6 (strain RIMD 2210633).